We begin with the raw amino-acid sequence, 181 residues long: Putative D-tyrosyl-tRNA(Tyr) deacylase 2 (181 aa).

Belongs to the DTD family. Highly divergent. In terms of assembly, homodimer.

The protein resides in the cytoplasm. Functionally, may hydrolyze D-tyrosyl-tRNA(Tyr) into D-tyrosine and free tRNA(Tyr). Could be a defense mechanism against a harmful effect of D-tyrosine. The sequence is that of Putative D-tyrosyl-tRNA(Tyr) deacylase 2 from Leishmania major.